We begin with the raw amino-acid sequence, 210 residues long: High mobility group protein B2 (210 aa).

Lys-3 carries the post-translational modification N6-acetyllysine. The segment at residues 9–79 (PRGKMSSYAF…RYDREMKNYV (71 aa)) is a DNA-binding region (HMG box 1). Cys-23 carries the cysteine sulfonic acid (-SO3H); alternate modification. Cys-23 and Cys-45 are disulfide-bonded. Residue Lys-30 is modified to N6-acetyllysine. At Ser-35 the chain carries Phosphoserine. Lys-43 is subject to N6-acetyllysine. Cys-45 bears the Cysteine sulfonic acid (-SO3H); alternate mark. The segment at 71 to 102 (YDREMKNYVPPKGDKKGKKKDPNAPKRPPSAF) is disordered. The residue at position 90 (Lys-90) is an N6-acetyllysine. A DNA-binding region (HMG box 2) is located at residues 95–163 (PKRPPSAFFL…KYEKDIAAYR (69 aa)). At Ser-100 the chain carries Phosphoserine. Cys-106 is subject to Cysteine sulfonic acid (-SO3H). N6-acetyllysine occurs at positions 114 and 141. Residues 162–172 (YRAKGKSEAGK) are compositionally biased toward basic and acidic residues. The interval 162–210 (YRAKGKSEAGKKGPGRPTGSKKKNEPEDEEEEEEEEEEEDDEEEEEDEE) is disordered. The tract at residues 165–180 (KGKSEAGKKGPGRPTG) is required for chemotactic activity. Over residues 187–210 (PEDEEEEEEEEEEEDDEEEEEDEE) the composition is skewed to acidic residues.

It belongs to the HMGB family. Interacts with POU2F2, POU2F1 and POU3F1. Component of the RAG complex composed of core components RAG1 and RAG2, and associated component HMGB1 or HMGB2. Component of the SET complex, composed of at least ANP32A, APEX1, HMGB2, NME1, SET and TREX1. Directly interacts with SET. Interacts with LEF1. Post-translationally, reduction/oxidation of cysteine residues Cys-23, Cys-45 and Cys-106 and a possible intramolecular disulfide bond involving Cys-23 and Cys-45 give rise to different redox forms with specific functional activities in various cellular compartments: 1- fully reduced HMGB2 (HMGB2C23hC45hC106h), 2- disulfide HMGB2 (HMGB2C23-C45C106h) and 3- sulfonyl HMGB2 (HMGB2C23soC45soC106so). As to expression, widely expressed in embryo. In adult mainly expressed in lymphoid organs and testes. Expressed in primary spermatocytes. Expressed in the superficial zone of articular cartilage.

The protein resides in the nucleus. Its subcellular location is the chromosome. The protein localises to the cytoplasm. It localises to the secreted. Multifunctional protein with various roles in different cellular compartments. May act in a redox sensitive manner. In the nucleus is an abundant chromatin-associated non-histone protein involved in transcription, chromatin remodeling and V(D)J recombination and probably other processes. Binds DNA with a preference to non-canonical DNA structures such as single-stranded DNA. Can bent DNA and enhance DNA flexibility by looping thus providing a mechanism to promote activities on various gene promoters by enhancing transcription factor binding and/or bringing distant regulatory sequences into close proximity. Involved in V(D)J recombination by acting as a cofactor of the RAG complex: acts by stimulating cleavage and RAG protein binding at the 23 bp spacer of conserved recombination signal sequences (RSS). Proposed to be involved in the innate immune response to nucleic acids by acting as a cytoplasmic promiscuous immunogenic DNA/RNA sensor which cooperates with subsequent discriminative sensing by specific pattern recognition receptors. In the extracellular compartment acts as a chemokine. Promotes proliferation and migration of endothelial cells implicating AGER/RAGE. Has antimicrobial activity in gastrointestinal epithelial tissues. Involved in inflammatory response to antigenic stimulus coupled with pro-inflammatory activity. May play a role in germ cell differentiation. Involved in modulation of neurogenesis probably by regulation of neural stem proliferation. Involved in articular cartilage surface maintenance implicating LEF1 and the Wnt/beta-catenin pathway. The chain is High mobility group protein B2 (Hmgb2) from Mus musculus (Mouse).